The following is a 244-amino-acid chain: 2-C-methyl-D-erythritol 4-phosphate cytidylyltransferase (244 aa).

The protein belongs to the IspD/TarI cytidylyltransferase family. IspD subfamily.

It catalyses the reaction 2-C-methyl-D-erythritol 4-phosphate + CTP + H(+) = 4-CDP-2-C-methyl-D-erythritol + diphosphate. It functions in the pathway isoprenoid biosynthesis; isopentenyl diphosphate biosynthesis via DXP pathway; isopentenyl diphosphate from 1-deoxy-D-xylulose 5-phosphate: step 2/6. Its function is as follows. Catalyzes the formation of 4-diphosphocytidyl-2-C-methyl-D-erythritol from CTP and 2-C-methyl-D-erythritol 4-phosphate (MEP). This chain is 2-C-methyl-D-erythritol 4-phosphate cytidylyltransferase, found in Solibacter usitatus (strain Ellin6076).